Here is a 466-residue protein sequence, read N- to C-terminus: Chromosomal replication initiator protein DnaA (466 aa).

Residues 1–86 (MSLSLWQQCL…EVGTKPVTQT (86 aa)) form a domain I, interacts with DnaA modulators region. Residues 86-129 (TLKTPVHNVVAPTQTTTAQPQRVAPAARSGWDNVPAPAEPTYRS) are domain II. The interval 130–346 (NVNVKHTFDN…GALNRVIANA (217 aa)) is domain III, AAA+ region. Positions 174, 176, 177, and 178 each coordinate ATP. The segment at 347–466 (NFTGRAITID…FSNLIRTLSS (120 aa)) is domain IV, binds dsDNA.

Belongs to the DnaA family. As to quaternary structure, oligomerizes as a right-handed, spiral filament on DNA at oriC.

It is found in the cytoplasm. In terms of biological role, plays an essential role in the initiation and regulation of chromosomal replication. ATP-DnaA binds to the origin of replication (oriC) to initiate formation of the DNA replication initiation complex once per cell cycle. Binds the DnaA box (a 9 base pair repeat at the origin) and separates the double-stranded (ds)DNA. Forms a right-handed helical filament on oriC DNA; dsDNA binds to the exterior of the filament while single-stranded (ss)DNA is stabiized in the filament's interior. The ATP-DnaA-oriC complex binds and stabilizes one strand of the AT-rich DNA unwinding element (DUE), permitting loading of DNA polymerase. After initiation quickly degrades to an ADP-DnaA complex that is not apt for DNA replication. Binds acidic phospholipids. The protein is Chromosomal replication initiator protein DnaA of Salmonella choleraesuis (strain SC-B67).